A 249-amino-acid chain; its full sequence is Proteasome activator complex subunit 1 (249 aa).

The segment at Pro-60 to Gly-102 is disordered. The segment covering Pro-68–Gly-98 has biased composition (basic and acidic residues).

The protein belongs to the PA28 family. In terms of assembly, heterodimer of PSME1 and PSME2, which forms a hexameric ring. PSME1 can form homoheptamers.

In terms of biological role, implicated in immunoproteasome assembly and required for efficient antigen processing. The PA28 activator complex enhances the generation of class I binding peptides by altering the cleavage pattern of the proteasome. This is Proteasome activator complex subunit 1 (PSME1) from Sus scrofa (Pig).